Here is a 262-residue protein sequence, read N- to C-terminus: Inactive snake venom serine proteinase 13 (262 aa).

The signal sequence occupies residues 1–18; that stretch reads MGLIRVLANLLILQLSYA. The propeptide occupies 19–24; that stretch reads QKSSEL. The region spanning 25–250 is the Peptidase S1 domain; the sequence is VIGGDECNIN…HLDWIQSIIA (226 aa). Disulfide bonds link C31/C162, C49/C65, C97/C257, C141/C211, C173/C190, and C201/C226. N78, N102, and N153 each carry an N-linked (GlcNAc...) asparagine glycan.

This sequence belongs to the peptidase S1 family. Snake venom subfamily. In terms of assembly, monomer. As to expression, expressed by the venom gland.

It is found in the secreted. The protein is Inactive snake venom serine proteinase 13 of Crotalus adamanteus (Eastern diamondback rattlesnake).